The sequence spans 1516 residues: MKRNGTRLNFAKANSTKSGSTRARDLMNKMSIIPEWHSLYSNTRKLPCSRPHSSPCKMQRTIFQDLCRPSSSTTAIANPVLSYLDIERILAQKISSRRDDIKKVFQILDRNHNQMVTKGDLKRVITAFLIPLTKDQFQDLLAQIPISSLGNVPYLEFLSRFGGGIDININGIKRVNENEVDNRRTVKEVQLTEKIFRNMRSIRKVFQVMDVNNTGLVQPQELRRVLETFCLRMQDGDYEKFLEQYNIDKTTAVDYNAFLKNLSVKNDASFKYLLSNAAELSRETQQGKNGKRLLDTGSSEDVWKNYSLDDLEKTFCQEFSKSYEKIEKALSAGDPSKGGYISLNYLKVVLDTFIYRLPRRIFIQLIRRFGLKTSTKINWKQFLTAIYERQKLEVSKTLPLKKRSSTEARNRSRKENIIKKLFKYSEDRYTALKKTLLIISSTPSGHITWEELRHILNCMVAKLNDSEFSELKQTFDPEGTGAVRVNSLLDVLDDSTKVRKMSPSTDTKTPLPVAWDSVEELVLDSITRNLQAFYSMLQSYDLRDTGTIGKNNFRKVMRVFCPYLSNEHLVRFSSKFQEAGSGRILYKKFLLSIGVGIPPPTPPLSSPKVQLSDQFQIEEPGQQDERTQPSGEKTSEINNMTKEEVIDGLKHRIQQKDPVFRKQFLSISKEPDVKINQEEFRKVLERSGMPMNDCQYAMLASKLGFKNEEGMSYQDFTMGFEDCMLSGLETVPLQSRTASRTNMDEHFISAEECLRIFPKKLKESFRDVYSAFFRIDLDRDGIISMHDFHRLLQYLQLNMVDLEFERFLSLLGLRLSVTLNFREFQNLCEKRPWKSDEAPQRLIRCKQKVADSELACEQAHQYLIMKAKTRWADLSKNFIETDNEGNGILRRRDIKNSLYGFDIPLTPREFEKLWQNYDTEGRGYITYQEFLHRLGIRYSPKVHRPYKEDYFNFLGHFTKPKQVQEEIQELQQISEREKLMNHYEEISKAFNAMEKSKPVALCRVQKVLQECGCPLKEEELISLLKSLDVSVHNNHIDPVEFLRALEISWASKARPKEKEESSPPPISFSKVTPDEVIKTMQEVVESSQPALVEAFSALDKEDTGFVKAMEFGDVLRSVCQKLTDNQYHYFLRRLRLHLTPNIHWKYFLENFSTFQDETADDWAENMPKAPPPMSPKETAHRDIVARVQKAVASHYHTIVQEFENFDTLKSNTVSRDEFRSICTRHIQILTDEQFDRLWSELPVNAKGRLKYQDFLSKLSIERVPSPPMAAGDSGESTMAQRGSSAPEFSQGTRSNLYSPPRDSRVGLKSRSHPCTPVGTPPLQNCEPIESRLRKQIQGCWRELLRECKEKDTDKQGTISAAEFLALVEKFKLDISREESQQLIVKYDLKNNGKFAYCDFIQSCVLLLKAKETSLMRRMRIQNADKMKEAGMETPSFYSALLRIQPKIVHCWRPMRRSFKTYDKNGTGLLSVADFRKVLRQYSINLSEEEFFHVLEYYDKSLSSKISYNDFLRAFLQ.

A disordered region spans residues Met-1 to Ala-23. A compositionally biased stretch (polar residues) spans Lys-12–Thr-21. EF-hand domains lie at Ser-96 to Pro-131, Arg-197 to Arg-232, Lys-321 to Arg-356, Ser-444 to Lys-462, and Arg-528 to Tyr-563. The Ca(2+) site is built by Asp-109, Asn-111, Asn-113, Met-115, Asp-120, Asp-210, Asn-212, Thr-214, and Glu-221. Residues Glu-618–Asn-638 are disordered. Residues Gln-628–Asn-638 show a composition bias toward polar residues. EF-hand domains lie at Lys-674–Pro-690, Glu-763–Asn-798, Leu-905–Pro-940, Ser-1086–Lys-1121, Ser-1193–Ile-1228, and Leu-1229–Pro-1264. Ca(2+)-binding residues include Asp-776, Asp-778, Asp-780, and Asp-787. Phosphothreonine is present on Thr-906. Residues Val-1263–Gly-1318 are disordered. A Phosphoserine modification is found at Ser-1265. The span at Gly-1274 to Tyr-1297 shows a compositional bias: polar residues. Position 1311 is a phosphoserine (Ser-1311). 2 positions are modified to phosphothreonine: Thr-1315 and Thr-1319. Positions Gly-1318–Gln-1516 are interaction with PARK7. EF-hand domains are found at residues Lys-1348 to Asp-1373, Ile-1374 to Ala-1409, Met-1454 to Asn-1484, and Leu-1485 to Gln-1516. The tract at residues Asn-1422–Gln-1516 is interaction with AR. Ca(2+)-binding residues include Asp-1462, Asn-1464, Thr-1466, and Asp-1473.

As to quaternary structure, microtubule inner protein component of sperm flagellar doublet microtubules. Binds PARK7. Part of a ternary complex containing PARK7, EFCAB6/DJBP and AR.

It is found in the nucleus. The protein localises to the cytoplasm. The protein resides in the cytoskeleton. It localises to the flagellum axoneme. In terms of biological role, negatively regulates the androgen receptor by recruiting histone deacetylase complex, and protein DJ-1 antagonizes this inhibition by abrogation of this complex. Microtubule inner protein (MIP) part of the dynein-decorated doublet microtubules (DMTs) in cilia axoneme, which is required for motile cilia beating. In Mus musculus (Mouse), this protein is EF-hand calcium-binding domain-containing protein 6 (Efcab6).